Reading from the N-terminus, the 371-residue chain is Ferrochelatase (371 aa).

Histidine 218 and glutamate 299 together coordinate Fe cation.

It belongs to the ferrochelatase family.

It localises to the cytoplasm. It catalyses the reaction heme b + 2 H(+) = protoporphyrin IX + Fe(2+). It functions in the pathway porphyrin-containing compound metabolism; protoheme biosynthesis; protoheme from protoporphyrin-IX: step 1/1. Catalyzes the ferrous insertion into protoporphyrin IX. This Cupriavidus necator (strain ATCC 17699 / DSM 428 / KCTC 22496 / NCIMB 10442 / H16 / Stanier 337) (Ralstonia eutropha) protein is Ferrochelatase.